A 183-amino-acid polypeptide reads, in one-letter code: Transmembrane protein 52B (183 aa).

Positions 1-24 (MGVRVHVVAASALLYFILLSGTRC) are cleaved as a signal peptide. A helical transmembrane segment spans residues 40–60 (VHLWYIWLLVVIGALLLLCGL). Residues 158-183 (DLPPVPEEKQLPPTEKESTRIVDSWN) are disordered. Basic and acidic residues predominate over residues 163 to 177 (PEEKQLPPTEKESTR).

It is found in the membrane. The protein is Transmembrane protein 52B (TMEM52B) of Homo sapiens (Human).